We begin with the raw amino-acid sequence, 461 residues long: uncharacterized protein (461 aa).

Positions 1–19 (MEKCSHESGRHSAENDGKY) are enriched in basic and acidic residues. Residues 1 to 21 (MEKCSHESGRHSAENDGKYDI) form a disordered region.

Belongs to the CapA family.

Functionally, could be involved in the biosynthesis of a cell wall component. This is an uncharacterized protein from Sinorhizobium fredii (strain NBRC 101917 / NGR234).